The following is a 474-amino-acid chain: MNFVTTIGLEVHVELKTNSKIFSPSPVQFGSEPNANTNVIDWGYPGVLPTPNKGVVEAGIKAATALHAEIEHHTYFDRKNYFYPDNPKAYQITQHEKPIAHDGWIEIEVDGKKKKIGIEEMHIEEDAGKNTHENDYSYVDLNRQGTPLIEIVSKPDIASPEEAYAYCEALRQRIQFTGVSDVKMEEGSMRVDVNISIRPAGSDKYGVKTEMKNLNSFNYVRKSLEYEEQRQQQVLMAGGKIQQETRRFDETTGQTILMRVKEGSDDYRYFPEPDIPAVDIDDDWIASVKKTIPEMPGSRRERYINEFGLTAYDAGVLTQTKEMSDFFDATVAEGADPKLASNYLQGDVNAYLNEHKVDLLATDLTPTNLAGMIKMISDETISSKIAKKVFKAIMAGSEPVQWVNDKGLVQLSDPAKLQPIVDDVLDNNQQSIDDFKNGKDRAVGFLVGQIMKKTRGQANPKVVNQLLMTSLKAR.

Belongs to the GatB/GatE family. GatB subfamily. In terms of assembly, heterotrimer of A, B and C subunits.

It catalyses the reaction L-glutamyl-tRNA(Gln) + L-glutamine + ATP + H2O = L-glutaminyl-tRNA(Gln) + L-glutamate + ADP + phosphate + H(+). The catalysed reaction is L-aspartyl-tRNA(Asn) + L-glutamine + ATP + H2O = L-asparaginyl-tRNA(Asn) + L-glutamate + ADP + phosphate + 2 H(+). Its function is as follows. Allows the formation of correctly charged Asn-tRNA(Asn) or Gln-tRNA(Gln) through the transamidation of misacylated Asp-tRNA(Asn) or Glu-tRNA(Gln) in organisms which lack either or both of asparaginyl-tRNA or glutaminyl-tRNA synthetases. The reaction takes place in the presence of glutamine and ATP through an activated phospho-Asp-tRNA(Asn) or phospho-Glu-tRNA(Gln). In Lactiplantibacillus plantarum (strain ATCC BAA-793 / NCIMB 8826 / WCFS1) (Lactobacillus plantarum), this protein is Aspartyl/glutamyl-tRNA(Asn/Gln) amidotransferase subunit B.